A 906-amino-acid chain; its full sequence is uncharacterized protein (906 aa).

2 disordered regions span residues 231-322 and 865-906; these read KEDA…PSTI and AGAY…DEDE. Over residues 236 to 250 the composition is skewed to low complexity; sequence TTKQTTTTTTTTPQT. The span at 264–281 shows a compositional bias: pro residues; the sequence is TPTPAPAPKPTTPKPTPA. Residues 302–314 are compositionally biased toward polar residues; the sequence is SVNNIPTPSDTNE. Over residues 867–906 the composition is skewed to acidic residues; that stretch reads AYEDDDDDEGEGNEDDEDNDENEDEDEGEGEGDSSEDEDE.

This is an uncharacterized protein from Dictyostelium sp. (strain GA11) (Slime mold).